Reading from the N-terminus, the 47-residue chain is Capistruin (47 aa).

The propeptide occupies 1–28; it reads MVRLLAKLLRSTIHGSNGVSLDAVSSTH. The isoaspartyl glycine isopeptide (Gly-Asp) cross-link spans 29–37; it reads GTPGFQTPD.

Post-translationally, it is assumed that the two processing enzymes CapB/CapC convert the precursor protein CapA into the mature lasso peptide capistruin. CapB is assumed to cleave the precursor protein CapA and to set an N-terminal Gly free, whose a-NH2 group acts as the nucleophile in the subsequent cyclization reaction. CapC is most likely involved in the side-chain carboxyl group activation of aspartic acid at position 9 generating the electrophile for the condensation reaction. CapD may export capistruin outside of the producing cells.

It is found in the secreted. Functionally, peptide antibiotic that functions through inhibition of the bacterial DNA-dependent RNA polymerase (RNAP). Inhibits transcription by binding in RNAP secondary channel, where it sterically blocks the folding of the trigger loop, which is essential for efficient catalysis. In contrast to MccJ25, does not restrict access of nucleotide substrates to the catalytic center and shows a non-competitive mode of inhibition. Shows activity against closely related Gram-negative Burkholderia and Pseudomonas strains. Is not active against Gram-positive bacteria. The protein is Capistruin of Burkholderia thailandensis (strain ATCC 700388 / DSM 13276 / CCUG 48851 / CIP 106301 / E264).